The sequence spans 247 residues: Phosphomannomutase (247 aa).

Asp-13 acts as the Nucleophile in catalysis. Mg(2+)-binding residues include Asp-13 and Asp-15. Residue Asp-15 is the Proton donor/acceptor of the active site. Positions 22, 124, 135, 142, 180, and 182 each coordinate alpha-D-mannose 1-phosphate. Mg(2+) is bound by residues Asp-208, Tyr-220, and Thr-225.

The protein belongs to the eukaryotic PMM family. As to quaternary structure, homodimer. Mg(2+) serves as cofactor.

Its subcellular location is the cytoplasm. It catalyses the reaction alpha-D-mannose 1-phosphate = D-mannose 6-phosphate. It participates in nucleotide-sugar biosynthesis; GDP-alpha-D-mannose biosynthesis; alpha-D-mannose 1-phosphate from D-fructose 6-phosphate: step 2/2. Catalyzes the interconversion of mannose-6-phosphate to mannose-1-phosphate, the precursor for the synthesis of GDP-mannose. GDP-mannose is an essential sugar nucleotide for the synthesis of D-mannose-containing cell wall polysaccharides (galactomannans and glucomannans), glycolipids, glycoproteins and the antioxidant L-ascorbate. Can complement the yeast temperature-sensitive mutant sec53-6. The protein is Phosphomannomutase of Glycine max (Soybean).